A 201-amino-acid chain; its full sequence is NAD(P)H-dependent FMN reductase ntnL (201 aa).

Residues Arg-12, 90–93 (EYNG), and Tyr-120 contribute to the FMN site.

As to quaternary structure, homodimer.

The catalysed reaction is FMNH2 + NADP(+) = FMN + NADPH + 2 H(+). It carries out the reaction FMNH2 + NAD(+) = FMN + NADH + 2 H(+). Its pathway is secondary metabolite biosynthesis; terpenoid biosynthesis. In terms of biological role, NAD(P)H-dependent FMN reductase; part of the gene cluster that mediates the biosynthesis of the meroterpenoids nectripenoids A and B, as well as cochliquninone D and isocochliquninone E. The pathway probably begins with the HR-PKS ntnH that catalyzes two chain-extension steps to form a reduced triketide, which then primes the SAT domain in the NR-PKS ntnG to initiate three more cycles of extension to give a linear hexaketide corresponding to the polyketide part of nectripenoids. The FAD-dependent monooxygenase ntnJ then performs an oxidative decarboxylation at C11 of the ntnH/ntnG product, via an electrophilic aromatic hydroxylation with concomitant ipso-decarboxylation. The membrane-bound polyprenyl transferase ntnF then introduces a farnesyl group before the FAD-dependent monooxygenase ntnK functions as the first epoxidase on terminal C12'-C13' olefin, followed by a second epoxidation on C7'-C8' catalyzed by ntnA. The terpene cyclase/mutase ntnI then initiates the sequential tricyclic ring formation through protonation of the terminal epoxide and catalyzes the regioselective and stereoselective 6/6/6-tricyclic ring formation. The cytochrome P450 monooxygenase ntnM may then hydroxylate C1'. The chain is NAD(P)H-dependent FMN reductase ntnL from Nectria sp.